Here is a 308-residue protein sequence, read N- to C-terminus: FGSLLGICLLTQIITGLLLATHYTADTTLAFSSVAHTCRNVQYGWLIRNLQANGASFFFICIYLHIGRGFYYGSYLFKETWNTGVILLLTLMATAFVGYVLPWRQMSFWGATVITNLFSALPYIGQTIVEWAWGGFSVDNPTLTRFFALHFLLPFLIAGLTLIHFTFLHESGSNNPLGIMSDCDKIPFHPYFSVKDILGFMFMLLPLTTLALFSPNLLGDPENFTPANPLVTPPHIKPEWYFLFAYAILRSIPNKLGGVLALAASVLVLFLAPFLHTSKQRTMAFRPLSQFLFWMLVANLLILTWVGS.

4 helical membrane passes run 1 to 21 (FGSL…LLAT), 45 to 66 (WLIR…YLHI), 81 to 101 (WNTG…GYVL), and 146 to 166 (FFAL…IHFT). Residue His-65 coordinates heme b. Residues His-150 and His-164 each coordinate heme b. His-169 is an a ubiquinone binding site. 3 helical membrane passes run 194–214 (VKDI…ALFS), 256–276 (LGGV…PFLH), and 288–308 (LSQF…WVGS).

It belongs to the cytochrome b family. As to quaternary structure, the cytochrome bc1 complex contains 11 subunits: 3 respiratory subunits (MT-CYB, CYC1 and UQCRFS1), 2 core proteins (UQCRC1 and UQCRC2) and 6 low-molecular weight proteins (UQCRH/QCR6, UQCRB/QCR7, UQCRQ/QCR8, UQCR10/QCR9, UQCR11/QCR10 and a cleavage product of UQCRFS1). This cytochrome bc1 complex then forms a dimer. Heme b serves as cofactor.

The protein resides in the mitochondrion inner membrane. Its function is as follows. Component of the ubiquinol-cytochrome c reductase complex (complex III or cytochrome b-c1 complex) that is part of the mitochondrial respiratory chain. The b-c1 complex mediates electron transfer from ubiquinol to cytochrome c. Contributes to the generation of a proton gradient across the mitochondrial membrane that is then used for ATP synthesis. This chain is Cytochrome b (MT-CYB), found in Colaptes rupicola (Southern Andean flicker).